A 375-amino-acid polypeptide reads, in one-letter code: Succinyl-diaminopimelate desuccinylase (375 aa).

A Zn(2+)-binding site is contributed by H66. Residue D68 is part of the active site. Position 99 (D99) interacts with Zn(2+). E133 functions as the Proton acceptor in the catalytic mechanism. E134, E162, and H348 together coordinate Zn(2+).

Belongs to the peptidase M20A family. DapE subfamily. Homodimer. Requires Zn(2+) as cofactor. It depends on Co(2+) as a cofactor.

The catalysed reaction is N-succinyl-(2S,6S)-2,6-diaminopimelate + H2O = (2S,6S)-2,6-diaminopimelate + succinate. It functions in the pathway amino-acid biosynthesis; L-lysine biosynthesis via DAP pathway; LL-2,6-diaminopimelate from (S)-tetrahydrodipicolinate (succinylase route): step 3/3. Functionally, catalyzes the hydrolysis of N-succinyl-L,L-diaminopimelic acid (SDAP), forming succinate and LL-2,6-diaminopimelate (DAP), an intermediate involved in the bacterial biosynthesis of lysine and meso-diaminopimelic acid, an essential component of bacterial cell walls. The protein is Succinyl-diaminopimelate desuccinylase of Stenotrophomonas maltophilia (strain R551-3).